A 116-amino-acid polypeptide reads, in one-letter code: Dynein light chain Tctex-type 3 (116 aa).

Tyrosine 4 is subject to 3'-nitrotyrosine.

The protein belongs to the dynein light chain Tctex-type family. As to quaternary structure, homodimer. The cytoplasmic dynein 1 complex consists of two catalytic heavy chains (HCs) and a number of non-catalytic subunits presented by intermediate chains (ICs), light intermediate chains (LICs) and light chains (LCs); the composition seems to vary in respect to the IC, LIC and LC composition. The heavy chain homodimer serves as a scaffold for the probable homodimeric assembly of the respective non-catalytic subunits. The ICs and LICs bind directly to the HC dimer and the LCs assemble on the IC dimer. DYNLT1 and DYNLT3 compete for association with dynein IC (DYNC1I1 or DYNC1I2). Self-associates. Interacts with DYNC1I1 and DYNC1I2. Interacts with BUB3. Interacts with SATB1 in nucleus to form complex with matrix attachment regions (MARs) of DNA.

It localises to the nucleus. The protein localises to the cytoplasm. Its subcellular location is the cytoskeleton. It is found in the chromosome. The protein resides in the centromere. It localises to the kinetochore. In terms of biological role, acts as one of several non-catalytic accessory components of the cytoplasmic dynein 1 complex that are thought to be involved in linking dynein to cargos and to adapter proteins that regulate dynein function. Cytoplasmic dynein 1 acts as a motor for the intracellular retrograde motility of vesicles and organelles along microtubules. Probably binds BUB3 as part of transport cargo. Required for the efficient progression through mitosis. The protein is Dynein light chain Tctex-type 3 (DYNLT3) of Canis lupus familiaris (Dog).